The primary structure comprises 707 residues: Casein kinase 1-like protein HD16 (707 aa).

The interval Y19–G67 is disordered. Positions A24 to G37 are enriched in low complexity. In terms of domain architecture, Protein kinase spans Y147–I425. Residues L153 to V161 and K184 each bind ATP. The Proton acceptor role is filled by D276.

Belongs to the protein kinase superfamily. CK1 Ser/Thr protein kinase family. Casein kinase I subfamily. Monomer. Interacts with GHD7 (via C-terminus). Interacts with SLR1. Autophosphorylated. As to expression, expressed in roots, leaves and stems. Expressed in leaf vascular bundles, and proximal regions of the shoot and roots.

Its subcellular location is the cytoplasm. It localises to the nucleus. The enzyme catalyses L-seryl-[protein] + ATP = O-phospho-L-seryl-[protein] + ADP + H(+). It catalyses the reaction L-threonyl-[protein] + ATP = O-phospho-L-threonyl-[protein] + ADP + H(+). Functionally, casein kinases are operationally defined by their preferential utilization of acidic proteins such as caseins as substrates. It can phosphorylate a large number of proteins. Can phosphorylate casein on threonine residues in vitro. Involved in the regulation of flowering time through gibberellin (GA) signaling, and independently of photoperiod. Phosphorylates the DELLA protein SLR1, stabilizing SLR1 protein and sustaining SLR1 activity as repressor of GA signaling. Required for normal development of male floral organs and grains, through modulation of GA signaling. Targeted and repressed by the homeobox protein HAZ1 during GA signaling. Can phosphorylate phosvitin and SLR1 in vitro. Is not required for clock function in either the presence or the absence of light signals. Involved in a genetic control pathway for photoperiodic flowering under long day (LD) conditions that includes HD1, GHD7, HD5 and HD2. Phosphorylates and activates GHD7, a major floral repressor under LD conditions. Phosphorylation of GHD7 enhances its function in the repression of EHD1, HD3A and HD3B/RFT1, and obviously delaying flowering. The polypeptide is Casein kinase 1-like protein HD16 (Oryza sativa subsp. japonica (Rice)).